The sequence spans 392 residues: 2-oxoisovalerate dehydrogenase subunit beta, mitochondrial (392 aa).

The N-terminal 50 residues, 1 to 50 (MAVVAAAAGWLLRLRAAGAEGHWRRLPGAGLARGFLHPAATVEDAAQRRQ), are a transit peptide targeting the mitochondrion. Y152 serves as a coordination point for thiamine diphosphate. K(+)-binding residues include G178, L180, T181, C228, and D231. Residue K232 is modified to N6-acetyllysine. Residue N233 coordinates K(+). The residue at position 241 (K241) is an N6-acetyllysine.

As to quaternary structure, heterotetramer of 2 alpha/BCKDHA and 2 beta chains/BCKDHB that forms the branched-chain alpha-keto acid decarboxylase (E1) component of the BCKD complex. The branched-chain alpha-ketoacid dehydrogenase is a large complex composed of three major building blocks E1, E2 and E3. It is organized around E2, a 24-meric cubic core composed of DBT, to which are associated 6 to 12 copies of E1, and approximately 6 copies of the dehydrogenase E3, a DLD dimer. Thiamine diphosphate serves as cofactor.

It is found in the mitochondrion matrix. It catalyses the reaction N(6)-[(R)-lipoyl]-L-lysyl-[protein] + 3-methyl-2-oxobutanoate + H(+) = N(6)-[(R)-S(8)-2-methylpropanoyldihydrolipoyl]-L-lysyl-[protein] + CO2. Functionally, together with BCKDHA forms the heterotetrameric E1 subunit of the mitochondrial branched-chain alpha-ketoacid dehydrogenase (BCKD) complex. The BCKD complex catalyzes the multi-step oxidative decarboxylation of alpha-ketoacids derived from the branched-chain amino-acids valine, leucine and isoleucine producing CO2 and acyl-CoA which is subsequently utilized to produce energy. The E1 subunit catalyzes the first step with the decarboxylation of the alpha-ketoacid forming an enzyme-product intermediate. A reductive acylation mediated by the lipoylamide cofactor of E2 extracts the acyl group from the E1 active site for the next step of the reaction. The polypeptide is 2-oxoisovalerate dehydrogenase subunit beta, mitochondrial (Homo sapiens (Human)).